A 299-amino-acid polypeptide reads, in one-letter code: RGG repeats nuclear RNA binding protein A (299 aa).

Positions 1–21 are enriched in gly residues; sequence RGGGRGGPRGGGRGRGPGRGR. Disordered stretches follow at residues 1–173 and 232–299; these read RGGG…KEMT and EAVE…LVAK. The segment covering 45–60 has biased composition (basic and acidic residues); sequence RVQEDGESGKLSERRG. Residues 61–78 are compositionally biased toward gly residues; sequence GYGGPRGGFHGGRRGGFN. Composition is skewed to basic and acidic residues over residues 86–98 and 134–146; these read EGER…DRRS and DGEK…KEAG. Positions 88 to 98 match the Arginine-rich RNA-binding motif E-R-P-R-R-X-[F/Y]-[E/D]-R-R-S motif; the sequence is ERPRRVFDRRS. Residues 267-278 are compositionally biased toward gly residues; sequence RGRGGFGGGVGG.

Belongs to the SERBP1-HABP4 family. In terms of tissue distribution, expressed in seedlings but not in roots.

Its subcellular location is the nucleus. The protein resides in the cytoplasm. The protein localises to the perinuclear region. Functionally, ribosome-binding protein that acts as a regulator of mRNA translation by promoting ribosome inactivation. Binds RNA. The protein is RGG repeats nuclear RNA binding protein A of Nicotiana tabacum (Common tobacco).